A 283-amino-acid polypeptide reads, in one-letter code: uncharacterized protein (283 aa).

A run of 4 helical transmembrane segments spans residues 11 to 31 (LFAY…YVSA), 35 to 55 (EGAL…WFGP), 56 to 76 (IYAL…MMFF), and 93 to 113 (LVVW…IHDI). The GGDEF domain maps to 162–283 (NSFVFLLLHM…LENEMMMNEL (122 aa)).

It is found in the cell membrane. This is an uncharacterized protein from Bacillus subtilis (strain 168).